The primary structure comprises 185 residues: Ribose 1,5-bisphosphate phosphokinase PhnN (185 aa).

Glycine 13–aspartate 20 serves as a coordination point for ATP.

It belongs to the ribose 1,5-bisphosphokinase family.

It catalyses the reaction alpha-D-ribose 1,5-bisphosphate + ATP = 5-phospho-alpha-D-ribose 1-diphosphate + ADP. It participates in metabolic intermediate biosynthesis; 5-phospho-alpha-D-ribose 1-diphosphate biosynthesis; 5-phospho-alpha-D-ribose 1-diphosphate from D-ribose 5-phosphate (route II): step 3/3. Functionally, catalyzes the phosphorylation of ribose 1,5-bisphosphate to 5-phospho-D-ribosyl alpha-1-diphosphate (PRPP). The sequence is that of Ribose 1,5-bisphosphate phosphokinase PhnN from Chromobacterium violaceum (strain ATCC 12472 / DSM 30191 / JCM 1249 / CCUG 213 / NBRC 12614 / NCIMB 9131 / NCTC 9757 / MK).